A 308-amino-acid chain; its full sequence is Probable manganese-dependent inorganic pyrophosphatase (308 aa).

Mn(2+) contacts are provided by histidine 9, aspartate 13, aspartate 15, aspartate 75, histidine 97, and aspartate 149.

The protein belongs to the PPase class C family. It depends on Mn(2+) as a cofactor.

It is found in the cytoplasm. It carries out the reaction diphosphate + H2O = 2 phosphate + H(+). In Listeria monocytogenes serotype 4a (strain HCC23), this protein is Probable manganese-dependent inorganic pyrophosphatase.